A 297-amino-acid chain; its full sequence is Ribonuclease HIII (297 aa).

Residues 81–297 (IPIIGTDEVG…NTKKAQALLK (217 aa)) enclose the RNase H type-2 domain. A divalent metal cation is bound by residues Asp-87, Glu-88, and Asp-192.

This sequence belongs to the RNase HII family. RnhC subfamily. Requires Mn(2+) as cofactor. Mg(2+) serves as cofactor.

The protein localises to the cytoplasm. The enzyme catalyses Endonucleolytic cleavage to 5'-phosphomonoester.. Its function is as follows. Endonuclease that specifically degrades the RNA of RNA-DNA hybrids. This chain is Ribonuclease HIII, found in Streptococcus agalactiae serotype III (strain NEM316).